The chain runs to 120 residues: Histone H2B (120 aa).

Positions 1–26 (MAEPAKKKPKKLPKKDKGQKDIKRKK) are disordered. Ala2 carries the post-translational modification Blocked amino end (Ala). 3 positions are modified to N6-acetyllysine: Lys7, Lys10, and Lys11. A Glycyl lysine isopeptide (Lys-Gly) (interchain with G-Cter in ubiquitin) cross-link involves residue Lys115.

It belongs to the histone H2B family. The nucleosome is a histone octamer containing two molecules each of H2A, H2B, H3 and H4 assembled in one H3-H4 heterotetramer and two H2A-H2B heterodimers. The octamer wraps approximately 147 bp of DNA. Post-translationally, can be acetylated to form H2BK6ac, H2BK33ac and H2BK34ac. Monoubiquitinated to form H2BK143ub1; may give a specific tag for epigenetic transcriptional activation.

Its subcellular location is the nucleus. It is found in the chromosome. Core component of nucleosome. Nucleosomes wrap and compact DNA into chromatin, limiting DNA accessibility to the cellular machineries which require DNA as a template. Histones thereby play a central role in transcription regulation, DNA repair, DNA replication and chromosomal stability. DNA accessibility is regulated via a complex set of post-translational modifications of histones, also called histone code, and nucleosome remodeling. This chain is Histone H2B, found in Pisum sativum (Garden pea).